A 351-amino-acid polypeptide reads, in one-letter code: Dihydroorotate dehydrogenase (quinone) (351 aa).

FMN contacts are provided by residues Ala61–Lys65 and Thr85. Lys65 lines the substrate pocket. Asn110–Phe114 provides a ligand contact to substrate. Positions 139 and 172 each coordinate FMN. Asn172 serves as a coordination point for substrate. Ser175 functions as the Nucleophile in the catalytic mechanism. Asn177 is a substrate binding site. Lys217 and Thr245 together coordinate FMN. Asn246 to Thr247 is a binding site for substrate. FMN contacts are provided by residues Gly268, Gly297, and Tyr318–Ser319.

Belongs to the dihydroorotate dehydrogenase family. Type 2 subfamily. As to quaternary structure, monomer. It depends on FMN as a cofactor.

The protein localises to the cell membrane. The catalysed reaction is (S)-dihydroorotate + a quinone = orotate + a quinol. It participates in pyrimidine metabolism; UMP biosynthesis via de novo pathway; orotate from (S)-dihydroorotate (quinone route): step 1/1. Its function is as follows. Catalyzes the conversion of dihydroorotate to orotate with quinone as electron acceptor. The protein is Dihydroorotate dehydrogenase (quinone) of Stenotrophomonas maltophilia (strain K279a).